Consider the following 380-residue polypeptide: 3-methylitaconate isomerase (380 aa).

This sequence belongs to the PrpF family. In terms of assembly, homotetramer.

It carries out the reaction 2-methylene-3-methylsuccinate = dimethylmaleate. Its pathway is cofactor degradation; nicotinate degradation; propanoate and pyruvate from 6-hydroxynicotinate: step 6/8. Inhibited by oxidized glutathione, p-chloromercuriphenylsulfonic acid and iodoacetic acid. Not inhibited by the chelating agent alpha,alpha-dipyridyl. Activity is slightly increased by EDTA. Not activated by Fe(2+), Mg(2+), Mn(2+) or Ca(2+). Unaffected by K(+), Na(+), NH4(+), Rb(+) or Li(+). Functionally, catalyzes the reversible isomerization of (R)-3-methylitaconate to 2,3-dimethylmaleate. Has very low isomerase activity with itaconate. This Eubacterium barkeri (Clostridium barkeri) protein is 3-methylitaconate isomerase (mii).